We begin with the raw amino-acid sequence, 415 residues long: Fructose-like permease IIC component 1 (415 aa).

Topologically, residues 1-46 are cytoplasmic; it reads MAIKKRSATVVPGASGAAAAVKNPQASKTSFWGELPQHVMSGISRM. The region spanning 35-410 is the PTS EIIC type-2 domain; the sequence is LPQHVMSGIS…RLMMFRKGKL (376 aa). The chain crosses the membrane as a helical span at residues 47 to 67; that stretch reads VPTLIMGGVILAFSQLIAYSW. At 68–101 the chain is on the periplasmic side; sequence LKIPAEIGIMDALNSGKFSGFDLSLLKFAWLSQS. A helical membrane pass occupies residues 102–122; it reads FGGVLFGFAIPMFAAFVANSI. The Cytoplasmic portion of the chain corresponds to 123–126; that stretch reads GGKL. A helical transmembrane segment spans residues 127–147; the sequence is AFPAGFIGGLMSTQPTQLLNF. The Periplasmic segment spans residues 148–157; it reads DPSTMQWATS. Residues 158-178 form a helical membrane-spanning segment; that stretch reads SPVPSTFIGALIISIVAGYLV. Residues 179 to 197 lie on the Cytoplasmic side of the membrane; it reads KWMNQKIQLPDFLLAFKTT. A helical membrane pass occupies residues 198 to 218; it reads FLLPILSAIFVMLAMYYVITP. Over 219–237 the chain is Periplasmic; sequence FGGWINGGIRTVLTAAGEK. The helical transmembrane segment at 238-258 threads the bilayer; it reads GALMYAMGIAAATAIDLGGPI. Topologically, residues 259-276 are cytoplasmic; sequence NKAAGFVAFSFTTDHVLP. The helical transmembrane segment at 277–297 threads the bilayer; it reads VTARSIAIVIPPIGLGLATII. The Periplasmic segment spans residues 298–318; the sequence is DRRLTGKRLFNAQLYPQGKTA. Residues 319-339 form a helical membrane-spanning segment; sequence MFLAFMGISEGAIPFALESPI. The Cytoplasmic portion of the chain corresponds to 340 to 341; it reads TA. The helical transmembrane segment at 342-362 threads the bilayer; it reads IPSYMVGAIVGSTAAVWLGAV. Residues 363-378 are Periplasmic-facing; it reads QWFPESAIWAWPLVTN. The helical transmembrane segment at 379-399 threads the bilayer; it reads LGVYMAGIALGAVITALMVVF. The Cytoplasmic segment spans residues 400–415; sequence LRLMMFRKGKLLIDSL.

It localises to the cell inner membrane. The phosphoenolpyruvate-dependent sugar phosphotransferase system (PTS), a major carbohydrate active -transport system, catalyzes the phosphorylation of incoming sugar substrates concomitant with their translocation across the cell membrane. This is Fructose-like permease IIC component 1 (fryC) from Escherichia coli (strain K12).